We begin with the raw amino-acid sequence, 600 residues long: Cytidine monophosphate-N-acetylneuraminic acid hydroxylase (600 aa).

The Rieske domain occupies Leu9 to Leu107. The [2Fe-2S] cluster site is built by Cys49, His51, Cys70, and His73.

The protein belongs to the CMP-Neu5Ac hydroxylase family. The cofactor is [2Fe-2S] cluster.

The protein localises to the cytoplasm. It carries out the reaction CMP-N-acetyl-beta-neuraminate + 2 Fe(II)-[cytochrome b5] + O2 + 2 H(+) = CMP-N-glycoloyl-beta-neuraminate + 2 Fe(III)-[cytochrome b5] + H2O. The protein operates within amino-sugar metabolism; N-acetylneuraminate metabolism. In terms of biological role, sialic acids are components of carbohydrate chains of glycoconjugates and are involved in cell-cell recognition and cell-pathogen interactions. Catalyzes the conversion of CMP-N-acetylneuraminic acid (CMP-Neu5Ac) into its hydroxylated derivative CMP-N-glycolylneuraminic acid (CMP-Neu5Gc), a sialic acid abundantly expressed at the surface of many cells. The sequence is that of Cytidine monophosphate-N-acetylneuraminic acid hydroxylase (CMAH) from Gorilla gorilla gorilla (Western lowland gorilla).